A 1023-amino-acid chain; its full sequence is Protein FAM13A (1023 aa).

The Rho-GAP domain occupies 43-231 (VSLQELERQG…KILENYNTLF (189 aa)). Residues 269–290 (LERDMPKPPPKTKIPKSRSEGS) are disordered. Ser-345 is subject to Phosphoserine. 2 disordered regions span residues 381–437 (VNNS…SGFN) and 459–562 (CAGE…EVPQ). Residues 384 to 405 (SGGQSSEDSESGTLSASSATSA) are compositionally biased toward low complexity. Basic and acidic residues-rich tracts occupy residues 412 to 427 (SKEQ…KGLI) and 509 to 524 (SDER…HTQH). Positions 536-549 (PSLSDTKQQRNQDA) are enriched in polar residues. 2 positions are modified to phosphoserine: Ser-597 and Ser-617. Disordered stretches follow at residues 628 to 663 (QYLD…QEDL) and 726 to 759 (ISEE…KKQE). Residues 666–730 (AQLTRRIQSL…ESKLKISEED (65 aa)) adopt a coiled-coil conformation. The residue at position 727 (Ser-727) is a Phosphoserine. Thr-732 bears the Phosphothreonine mark. The span at 738–748 (RSNTLPKSFGS) shows a compositional bias: polar residues. Residues 750-759 (LEKEDEKKQE) show a composition bias toward basic and acidic residues. A coiled-coil region spans residues 946-978 (ASIPELLEHLQEMREEKKRIRKKLRDFEDNFFR).

This sequence belongs to the FAM13 family. Isoform 1 is widely expressed, with highest expression in skeletal muscle, thymus, brain and lung. Isoform 3 is less abundant than isoform 1 and predominantly expressed in kidney, pancreas, liver, lung and thymus.

The polypeptide is Protein FAM13A (FAM13A) (Homo sapiens (Human)).